A 117-amino-acid polypeptide reads, in one-letter code: UPF0122 protein Teth39_1278 (117 aa).

This sequence belongs to the UPF0122 family.

In terms of biological role, might take part in the signal recognition particle (SRP) pathway. This is inferred from the conservation of its genetic proximity to ftsY/ffh. May be a regulatory protein. The protein is UPF0122 protein Teth39_1278 of Thermoanaerobacter pseudethanolicus (strain ATCC 33223 / 39E) (Clostridium thermohydrosulfuricum).